A 238-amino-acid chain; its full sequence is UDP-2,3-diacylglucosamine hydrolase (238 aa).

The Mn(2+) site is built by D8, H10, D41, N78, and H113. 78 to 79 (NR) is a substrate binding site. Residues D121, S159, N163, K166, and H194 each contribute to the substrate site. 2 residues coordinate Mn(2+): H194 and H196.

This sequence belongs to the LpxH family. It depends on Mn(2+) as a cofactor.

The protein resides in the cell inner membrane. It catalyses the reaction UDP-2-N,3-O-bis[(3R)-3-hydroxytetradecanoyl]-alpha-D-glucosamine + H2O = 2-N,3-O-bis[(3R)-3-hydroxytetradecanoyl]-alpha-D-glucosaminyl 1-phosphate + UMP + 2 H(+). The protein operates within glycolipid biosynthesis; lipid IV(A) biosynthesis; lipid IV(A) from (3R)-3-hydroxytetradecanoyl-[acyl-carrier-protein] and UDP-N-acetyl-alpha-D-glucosamine: step 4/6. Hydrolyzes the pyrophosphate bond of UDP-2,3-diacylglucosamine to yield 2,3-diacylglucosamine 1-phosphate (lipid X) and UMP by catalyzing the attack of water at the alpha-P atom. Involved in the biosynthesis of lipid A, a phosphorylated glycolipid that anchors the lipopolysaccharide to the outer membrane of the cell. The sequence is that of UDP-2,3-diacylglucosamine hydrolase from Shewanella halifaxensis (strain HAW-EB4).